A 200-amino-acid chain; its full sequence is Recombination protein RecR (200 aa).

The segment at 57-72 (CRQCRTLTEDELCPQC) adopts a C4-type zinc-finger fold. The Toprim domain occupies 80–175 (TLLCVVEGPM…ITSRIAHGVP (96 aa)).

The protein belongs to the RecR family.

Its function is as follows. May play a role in DNA repair. It seems to be involved in an RecBC-independent recombinational process of DNA repair. It may act with RecF and RecO. The protein is Recombination protein RecR of Pseudomonas fluorescens (strain ATCC BAA-477 / NRRL B-23932 / Pf-5).